The primary structure comprises 49 residues: Protein YdfW (49 aa).

Residues 16–49 (PKADHPWLTRRTQSHQQVKPPKLPKKKPDPDKKD) form a disordered region.

Its function is as follows. May be involved in H(2) production during fermentative growth. This Escherichia coli (strain K12) protein is Protein YdfW (ydfW).